Here is a 614-residue protein sequence, read N- to C-terminus: DBH-like monooxygenase protein 1 (614 aa).

The first 22 residues, 1–22, serve as a signal peptide directing secretion; the sequence is MRPLRPWALLLGALLGAAAAAA. Residues 23–592 are Lumenal-facing; that stretch reads RRYPHVAVLD…SSSCLPCSLS (570 aa). The DOMON domain maps to 35 to 148; that stretch reads AAYRLLWGRR…STVRVIWAYH (114 aa). Residue Asn114 is glycosylated (N-linked (GlcNAc...) asparagine). Tyr203 is a catalytic residue. 2 disulfides stabilise this stretch: Cys205–Cys257 and Cys242–Cys269. The Cu cation site is built by His235 and His236. N-linked (GlcNAc...) asparagine glycosylation is present at Asn247. Cu cation contacts are provided by His307, His389, His391, and Met464. Disulfide bonds link Cys364–Cys480, Cys368–Cys550, and Cys443–Cys465. His389 is an active-site residue. 2 N-linked (GlcNAc...) asparagine glycosylation sites follow: Asn476 and Asn517. A helical membrane pass occupies residues 593–613; the sequence is LTLLFVVYVASSTIGNFGPVV.

Belongs to the copper type II ascorbate-dependent monooxygenase family. It depends on Cu(2+) as a cofactor.

The protein localises to the endoplasmic reticulum membrane. This is DBH-like monooxygenase protein 1 (MOXD1) from Gallus gallus (Chicken).